The sequence spans 182 residues: Translation initiation factor IF-3 (182 aa).

Belongs to the IF-3 family. As to quaternary structure, monomer.

It is found in the cytoplasm. Functionally, IF-3 binds to the 30S ribosomal subunit and shifts the equilibrium between 70S ribosomes and their 50S and 30S subunits in favor of the free subunits, thus enhancing the availability of 30S subunits on which protein synthesis initiation begins. This is Translation initiation factor IF-3 from Thermosynechococcus vestitus (strain NIES-2133 / IAM M-273 / BP-1).